We begin with the raw amino-acid sequence, 507 residues long: Trigger factor (507 aa).

The region spanning 162-243 is the PPIase FKBP-type domain; the sequence is GDFVSLDLSA…VRGVKEKELP (82 aa). Positions 434–507 are disordered; that stretch reads NLPRRPSGEA…DSELPASETK (74 aa). The segment covering 442 to 460 has biased composition (acidic residues); sequence EAEDDVRDISDELDAEELE. Low complexity predominate over residues 461–488; sequence VPAAAPSAEVTAAAGDEATATATATDAD.

The protein belongs to the FKBP-type PPIase family. Tig subfamily.

The protein resides in the cytoplasm. It catalyses the reaction [protein]-peptidylproline (omega=180) = [protein]-peptidylproline (omega=0). Its function is as follows. Involved in protein export. Acts as a chaperone by maintaining the newly synthesized protein in an open conformation. Functions as a peptidyl-prolyl cis-trans isomerase. This is Trigger factor from Parafrankia sp. (strain EAN1pec).